The following is a 127-amino-acid chain: MAEGKKYEIAVKVHTTYLPEQSDEALDRYVFAYTIVLSNTGTVTAQLISRHWVIADGSGGVQEVRGLGVVGEQPLLKPGDTYEYTSGTAISTPVGSMKGSYQMVAEDGLRFDAPIPEFILSVPRILH.

Residues 3 to 127 enclose the ApaG domain; it reads EGKKYEIAVK…FILSVPRILH (125 aa).

The sequence is that of Protein ApaG from Nitrosospira multiformis (strain ATCC 25196 / NCIMB 11849 / C 71).